The sequence spans 204 residues: N-alpha-acetyltransferase 40 (204 aa).

The 164-residue stretch at 39 to 202 folds into the N-acetyltransferase domain; the sequence is EIYHHLEKGL…YYILYTKSRK (164 aa). Substrate-binding positions include tyrosine 64, 107-109, and tyrosine 118; that span reads TVE. Acetyl-CoA contacts are provided by residues 120-122 and 128-133; these read IQL and GRNVGK. Position 154 (threonine 154) interacts with substrate. Asparagine 159 lines the acetyl-CoA pocket. Residue serine 176 coordinates substrate.

The protein belongs to the acetyltransferase family. NAA40 subfamily.

Its subcellular location is the cytoplasm. The protein resides in the nucleus. The enzyme catalyses N-terminal L-seryl-[histone H4] + acetyl-CoA = N-terminal N(alpha)-acetyl-L-seryl-[histone H4] + CoA + H(+). The catalysed reaction is N-terminal L-seryl-[histone H2A] + acetyl-CoA = N-terminal N(alpha)-acetyl-L-seryl-[histone H2A] + CoA + H(+). In terms of biological role, N-alpha-acetyltransferase that specifically mediates the acetylation of the N-terminal residues of histones H4 and H2A. This Schizosaccharomyces pombe (strain 972 / ATCC 24843) (Fission yeast) protein is N-alpha-acetyltransferase 40.